Consider the following 303-residue polypeptide: Mitochondrial basic amino acids transporter (303 aa).

6 consecutive transmembrane segments (helical) span residues alanine 2–phenylalanine 22, glycine 61–glycine 81, phenylalanine 96–alanine 116, glycine 153–tyrosine 172, leucine 187–threonine 207, and leucine 255–tyrosine 275. Solcar repeat units lie at residues alanine 2–alanine 86, aspartate 90–alanine 178, and aspartate 185–tyrosine 275. The disordered stretch occupies residues glycine 282–leucine 303. The span at glutamate 284 to leucine 303 shows a compositional bias: low complexity.

This sequence belongs to the mitochondrial carrier (TC 2.A.29) family.

Its subcellular location is the mitochondrion inner membrane. The catalysed reaction is L-lysine(out) + L-arginine(in) = L-lysine(in) + L-arginine(out). It carries out the reaction L-histidine(out) + L-arginine(in) = L-histidine(in) + L-arginine(out). The enzyme catalyses L-ornithine(in) + L-arginine(out) = L-ornithine(out) + L-arginine(in). It catalyses the reaction L-homoarginine(in) + L-arginine(out) = L-homoarginine(out) + L-arginine(in). The catalysed reaction is N(omega)-methyl-L-arginine(in) + L-arginine(out) = N(omega)-methyl-L-arginine(out) + L-arginine(in). It carries out the reaction L-arginine(in) = L-arginine(out). The enzyme catalyses L-lysine(in) = L-lysine(out). It catalyses the reaction L-ornithine(in) = L-ornithine(out). The catalysed reaction is L-histidine(out) = L-histidine(in). Functionally, mitochondrial transporter of arginine, lysine, homoarginine, methylarginine and, to a much lesser extent, ornithine and histidine. Does not transport carnitine nor acylcarnitines. Functions by both counter-exchange and uniport mechanisms. Plays a physiological role in the import of basic amino acids into mitochondria for mitochondrial protein synthesis and amino acid degradation. The sequence is that of Mitochondrial basic amino acids transporter from Homo sapiens (Human).